The chain runs to 364 residues: MKKLAISIGDINSIGLEILVRSHEELSKICTPFYFIHESLLNKALKLLNLKLFNAKIVAFKDDKDYEFNFIKKENSLEIYSFCLPLGFKVDENFEIQAGEIDAKSGLYGFLSFKAASYFVYEKHAHALLTLPIHKKAWEDAGLKYKGHTDALRDFFKKNAIMMLGCKELFVGLFSEHIPLAKVSKKITFKNLSIFLKDFYKETHFKKMGLLGFNPHAGDYGVIGGEEEKIMEKAIAFVNAFLHSKKDEKFFKKALKDENLQKELLLNFKGKGVYLPYPLVADTAFTKAGLKNCNRLVAMYHDLALAPLKALYFDKSINVSLNLPIIRVSVDHGTAFDKAYKNAKINTKSYFEAAKFAINLNSKA.

Substrate is bound by residues histidine 148 and threonine 149. Residues histidine 177, histidine 216, and histidine 301 each contribute to the a divalent metal cation site. Substrate-binding residues include lysine 309, asparagine 318, and arginine 327.

It belongs to the PdxA family. In terms of assembly, homodimer. It depends on Zn(2+) as a cofactor. Mg(2+) serves as cofactor. The cofactor is Co(2+).

Its subcellular location is the cytoplasm. It catalyses the reaction 4-(phosphooxy)-L-threonine + NAD(+) = 3-amino-2-oxopropyl phosphate + CO2 + NADH. It participates in cofactor biosynthesis; pyridoxine 5'-phosphate biosynthesis; pyridoxine 5'-phosphate from D-erythrose 4-phosphate: step 4/5. In terms of biological role, catalyzes the NAD(P)-dependent oxidation of 4-(phosphooxy)-L-threonine (HTP) into 2-amino-3-oxo-4-(phosphooxy)butyric acid which spontaneously decarboxylates to form 3-amino-2-oxopropyl phosphate (AHAP). The chain is 4-hydroxythreonine-4-phosphate dehydrogenase from Campylobacter jejuni subsp. jejuni serotype O:23/36 (strain 81-176).